A 132-amino-acid chain; its full sequence is Small ribosomal subunit protein uS11 (132 aa).

It belongs to the universal ribosomal protein uS11 family. Part of the 30S ribosomal subunit. Interacts with proteins S7 and S18. Binds to IF-3.

In terms of biological role, located on the platform of the 30S subunit, it bridges several disparate RNA helices of the 16S rRNA. Forms part of the Shine-Dalgarno cleft in the 70S ribosome. This Clostridioides difficile (strain 630) (Peptoclostridium difficile) protein is Small ribosomal subunit protein uS11.